Here is a 412-residue protein sequence, read N- to C-terminus: Solute carrier family 22 member 18 (412 aa).

Helical transmembrane passes span 16-36 (GIII…FMQF), 51-71 (VSFG…GPVF), 117-137 (LPAA…DLTA), 148-168 (LGLC…TLST), 176-196 (AFLA…CIPV), 232-252 (FLVK…FSII), 264-284 (AGYL…LVIG), 294-314 (ALLR…ALMS), 316-336 (VFHF…LNIV), and 380-400 (GVSI…LVLW).

The protein belongs to the major facilitator (TC 2.A.1) superfamily. Organic cation transporter (TC 2.A.1.19) family.

The protein localises to the apical cell membrane. May act as a transporter of organic cations based on a proton efflux antiport mechanism. May play a role in the transport of chloroquine and quinidine-related compounds in kidney. Plays a role in the regulation of lipid metabolism. The protein is Solute carrier family 22 member 18 (Slc67a1) of Rattus norvegicus (Rat).